The sequence spans 285 residues: Probable cobalamin biosynthesis protein CobD (285 aa).

4 helical membrane-spanning segments follow: residues 10–32 (LIDLMFGEPPAIIHPVVGFGKVI), 45–67 (YLDFLVGAISSLVVIGLAFILSH), 145–167 (VIAPLFYYLIFGLPGAVVYRAVN), and 266–283 (VYWIIVVEFLLIVAIILY).

This sequence belongs to the CobD/CbiB family.

The protein localises to the cell membrane. The protein operates within cofactor biosynthesis; adenosylcobalamin biosynthesis. Its function is as follows. Converts cobyric acid to cobinamide by the addition of aminopropanol on the F carboxylic group. This Pyrococcus furiosus (strain ATCC 43587 / DSM 3638 / JCM 8422 / Vc1) protein is Probable cobalamin biosynthesis protein CobD.